A 330-amino-acid polypeptide reads, in one-letter code: Phosphate acyltransferase (330 aa).

It belongs to the PlsX family. In terms of assembly, homodimer. Probably interacts with PlsY.

It localises to the cytoplasm. The catalysed reaction is a fatty acyl-[ACP] + phosphate = an acyl phosphate + holo-[ACP]. The protein operates within lipid metabolism; phospholipid metabolism. Its function is as follows. Catalyzes the reversible formation of acyl-phosphate (acyl-PO(4)) from acyl-[acyl-carrier-protein] (acyl-ACP). This enzyme utilizes acyl-ACP as fatty acyl donor, but not acyl-CoA. This chain is Phosphate acyltransferase, found in Streptococcus pneumoniae (strain ATCC 700669 / Spain 23F-1).